Here is a 180-residue protein sequence, read N- to C-terminus: Major urinary protein 2 (180 aa).

An N-terminal signal peptide occupies residues 1 to 18 (MKMLLLLCLGLTLVCVHA). Residues C82 and C175 are joined by a disulfide bond.

This sequence belongs to the calycin superfamily. Lipocalin family. In terms of tissue distribution, abundant in the urine of adult male mice but absent from that of females.

The protein localises to the secreted. Binds pheromones that are released from drying urine of males. These pheromones affect the sexual behavior of females. This is Major urinary protein 2 (Mup2) from Mus musculus (Mouse).